Reading from the N-terminus, the 87-residue chain is Cell division topological specificity factor (87 aa).

Belongs to the MinE family.

Functionally, prevents the cell division inhibition by proteins MinC and MinD at internal division sites while permitting inhibition at polar sites. This ensures cell division at the proper site by restricting the formation of a division septum at the midpoint of the long axis of the cell. This Vibrio vulnificus (strain CMCP6) protein is Cell division topological specificity factor.